Reading from the N-terminus, the 358-residue chain is tRNA N6-adenosine threonylcarbamoyltransferase (358 aa).

His-111 and His-115 together coordinate Fe cation. Substrate-binding positions include 146 to 150, Asp-179, Gly-192, and Asn-294; that span reads LVSGG. Asp-322 contacts Fe cation.

This sequence belongs to the KAE1 / TsaD family. Fe(2+) serves as cofactor.

The protein localises to the cytoplasm. The catalysed reaction is L-threonylcarbamoyladenylate + adenosine(37) in tRNA = N(6)-L-threonylcarbamoyladenosine(37) in tRNA + AMP + H(+). Required for the formation of a threonylcarbamoyl group on adenosine at position 37 (t(6)A37) in tRNAs that read codons beginning with adenine. Is involved in the transfer of the threonylcarbamoyl moiety of threonylcarbamoyl-AMP (TC-AMP) to the N6 group of A37, together with TsaE and TsaB. TsaD likely plays a direct catalytic role in this reaction. This chain is tRNA N6-adenosine threonylcarbamoyltransferase, found in Helicobacter hepaticus (strain ATCC 51449 / 3B1).